A 251-amino-acid chain; its full sequence is DNA repair protein RecO (251 aa).

The protein belongs to the RecO family.

In terms of biological role, involved in DNA repair and RecF pathway recombination. In Staphylococcus saprophyticus subsp. saprophyticus (strain ATCC 15305 / DSM 20229 / NCIMB 8711 / NCTC 7292 / S-41), this protein is DNA repair protein RecO.